The chain runs to 434 residues: MEFSERKRSRKSQSFKLVSRDYHHEVYKISEFSNDVNGETKETQPIYLGDESMEIKKQITGMRRLLNDSTGRIYQRVGKEGEKLKQEPQVVDLVWPQRSNSSTEASQGLHSNSRGAWNELPTQSGQFSGQSGPRSRTFQTQPHISASSNGELPGVNSIVGSNCCTCNCQSTLQAILQELKTMRKLMQFQAVGTQNRQQPPISLMCSQRTAVSRKRNKKKKVLPKTVQPVTAVEPKPSPLETEKKPAASATRPPGLQAAERTSTEENHVLGFGIVLESPSSDPEVQLAEGFDVFMPKSQLDSILSNYTRSGSLLFRKLVCAFFDDKTLANSLPNGKRKRGFNDNRKGLDQNIVGAIKVFTENYCTANHVDKLPGPRDWVQILQDQIKLARRRLKRGSAEVADGDERLDRISLPPTGHTFVIKRETPEDPEPGSVA.

Glycyl lysine isopeptide (Lys-Gly) (interchain with G-Cter in SUMO2) cross-links involve residues Lys16, Lys56, and Lys85. Disordered regions lie at residues 96–151 and 212–262; these read PQRS…SNGE and SRKR…ERTS. Positions 97–150 are enriched in polar residues; the sequence is QRSNSSTEASQGLHSNSRGAWNELPTQSGQFSGQSGPRSRTFQTQPHISASSNG. Residues 212-222 are compositionally biased toward basic residues; sequence SRKRNKKKKVL. A Glycyl lysine isopeptide (Lys-Gly) (interchain with G-Cter in SUMO2) cross-link involves residue Lys244. In terms of domain architecture, BEN spans 289-399; it reads GFDVFMPKSQ…RRLKRGSAEV (111 aa). Position 326 is a phosphothreonine (Thr326). The residue at position 330 (Ser330) is a Phosphoserine. Residues 414 to 434 are disordered; it reads TGHTFVIKRETPEDPEPGSVA.

The chain is BEN domain-containing protein 7 (Bend7) from Mus musculus (Mouse).